The sequence spans 365 residues: Protein RecA (365 aa).

Position 73-80 (73-80) interacts with ATP; that stretch reads GPESSGKT.

It belongs to the RecA family.

The protein resides in the cytoplasm. Functionally, can catalyze the hydrolysis of ATP in the presence of single-stranded DNA, the ATP-dependent uptake of single-stranded DNA by duplex DNA, and the ATP-dependent hybridization of homologous single-stranded DNAs. It interacts with LexA causing its activation and leading to its autocatalytic cleavage. The sequence is that of Protein RecA from Prochlorococcus marinus (strain AS9601).